The following is a 435-amino-acid chain: CUB and peptidase domain-containing protein 1 (435 aa).

An N-terminal signal peptide occupies residues 1 to 16; sequence SGFHLSFSFFRRAVCG. The Peptidase S1 domain maps to 25–261; the sequence is IVGGTVAPIN…LKSWITGKIS (237 aa). An intrachain disulfide couples Cys-50 to Cys-66. Residues His-65 and Asp-116 each act as charge relay system in the active site. Intrachain disulfides connect Cys-151-Cys-218, Cys-182-Cys-197, Cys-208-Cys-237, and Cys-322-Cys-341. Ser-212 serves as the catalytic Charge relay system. The region spanning 256-378 is the CUB domain; that stretch reads ITGKISRSPA…SGFHLSFSFF (123 aa).

The protein belongs to the peptidase S1 family. In terms of tissue distribution, component of the acid-insoluble organic matrix of the aragonitic skeleton (at protein level).

The protein localises to the secreted. This is CUB and peptidase domain-containing protein 1 from Acropora millepora (Staghorn coral).